We begin with the raw amino-acid sequence, 168 residues long: Photosystem I assembly protein Ycf3 (168 aa).

TPR repeat units lie at residues 35-68, 72-105, and 120-153; these read AFTYYRDGMSAQSEGNYAEALQNYYEAMRLEIDP, SYILYNIGLIHTSNGEHTKALEYYFRALERNPFL, and GEQAIRQGDSEIAEAWFDQAAEYWKQAISLTPGN.

It belongs to the Ycf3 family.

It is found in the plastid. Its subcellular location is the chloroplast thylakoid membrane. Functionally, essential for the assembly of the photosystem I (PSI) complex. May act as a chaperone-like factor to guide the assembly of the PSI subunits. The protein is Photosystem I assembly protein Ycf3 of Coffea arabica (Arabian coffee).